Reading from the N-terminus, the 88-residue chain is GYLGGYAAPAVAVAPAPALAVAHAPAVVVATSYARISQVTNSVPIAVAAPAVPKAAVPVAAPVVAAAPVIAAHAPLALGHGFGYGGYH.

Repeat copies occupy residues 7–10, 48–51, 55–58, 60–63, and 66–69.

Functionally, component of the cuticle of migratory locust which contains more than 100 different structural proteins. The polypeptide is Cuticle protein 70, isoforms A and B (Locusta migratoria (Migratory locust)).